A 194-amino-acid chain; its full sequence is Fe/S biogenesis protein NfuA (194 aa).

2 residues coordinate [4Fe-4S] cluster: C152 and C155.

The protein belongs to the NfuA family. In terms of assembly, homodimer. It depends on [4Fe-4S] cluster as a cofactor.

Functionally, involved in iron-sulfur cluster biogenesis. Binds a 4Fe-4S cluster, can transfer this cluster to apoproteins, and thereby intervenes in the maturation of Fe/S proteins. Could also act as a scaffold/chaperone for damaged Fe/S proteins. The chain is Fe/S biogenesis protein NfuA from Pseudomonas fluorescens (strain SBW25).